We begin with the raw amino-acid sequence, 309 residues long: Probable pathogenesis-related protein ARB_02861 (309 aa).

The signal sequence occupies residues 1-17 (MKSSVLMTALCVAGSLA). The span at 47 to 59 (CPTVIPTTSYKPE) shows a compositional bias: low complexity. Residues 47 to 152 (CPTVIPTTSY…PPPPGKDYKE (106 aa)) form a disordered region. Pro residues-rich tracts occupy residues 61–92 (TSKPPVIPPVPTSSAEPLPPPPVEPSTIPCPE) and 99–147 (APPP…PPPG). In terms of domain architecture, SCP spans 154–284 (AGYHHNVHRS…GDAYYTVCNY (131 aa)). Asparagine 164 carries N-linked (GlcNAc...) asparagine glycosylation.

The protein belongs to the CRISP family.

It localises to the secreted. Functionally, secreted protein required for efficient export of lipids such as acetylated sterols. Acts in detoxification of hydrophobic compounds. This chain is Probable pathogenesis-related protein ARB_02861, found in Arthroderma benhamiae (strain ATCC MYA-4681 / CBS 112371) (Trichophyton mentagrophytes).